A 1167-amino-acid polypeptide reads, in one-letter code: Pesticidal crystal protein Cry1Ja (1167 aa).

Belongs to the delta endotoxin family.

Promotes colloidosmotic lysis by binding to the midgut epithelial cells of many lepidopteran larvae. In Bacillus thuringiensis, this protein is Pesticidal crystal protein Cry1Ja (cry1Ja).